The chain runs to 176 residues: Ribosome maturation factor RimM (176 aa).

In terms of domain architecture, PRC barrel spans 100–173 (KDEYHYHDLI…WLLINPPPGL (74 aa)).

It belongs to the RimM family. Binds ribosomal protein uS19.

Its subcellular location is the cytoplasm. Functionally, an accessory protein needed during the final step in the assembly of 30S ribosomal subunit, possibly for assembly of the head region. Essential for efficient processing of 16S rRNA. May be needed both before and after RbfA during the maturation of 16S rRNA. It has affinity for free ribosomal 30S subunits but not for 70S ribosomes. This chain is Ribosome maturation factor RimM, found in Prochlorococcus marinus (strain NATL2A).